A 263-amino-acid polypeptide reads, in one-letter code: GTP cyclohydrolase 1 type 2 homolog (263 aa).

5 residues coordinate a divalent metal cation: H76, H77, D113, H231, and E235.

Belongs to the GTP cyclohydrolase I type 2/NIF3 family. In terms of assembly, homohexamer.

The protein is GTP cyclohydrolase 1 type 2 homolog of Deinococcus radiodurans (strain ATCC 13939 / DSM 20539 / JCM 16871 / CCUG 27074 / LMG 4051 / NBRC 15346 / NCIMB 9279 / VKM B-1422 / R1).